Consider the following 156-residue polypeptide: Ribosomal RNA large subunit methyltransferase H (156 aa).

S-adenosyl-L-methionine contacts are provided by residues leucine 73, glycine 104, and 123–128 (LSALTL).

The protein belongs to the RNA methyltransferase RlmH family. Homodimer.

It is found in the cytoplasm. It catalyses the reaction pseudouridine(1915) in 23S rRNA + S-adenosyl-L-methionine = N(3)-methylpseudouridine(1915) in 23S rRNA + S-adenosyl-L-homocysteine + H(+). Specifically methylates the pseudouridine at position 1915 (m3Psi1915) in 23S rRNA. The polypeptide is Ribosomal RNA large subunit methyltransferase H (Colwellia psychrerythraea (strain 34H / ATCC BAA-681) (Vibrio psychroerythus)).